The sequence spans 211 residues: Ribonuclease HII (211 aa).

One can recognise an RNase H type-2 domain in the interval 1–205 (MRFGVDEAGK…CDDVLAAASQ (205 aa)). Residues D6, E7, and D100 each contribute to the a divalent metal cation site.

It belongs to the RNase HII family. Requires Mn(2+) as cofactor. The cofactor is Mg(2+).

Its subcellular location is the cytoplasm. It carries out the reaction Endonucleolytic cleavage to 5'-phosphomonoester.. Functionally, endonuclease that specifically degrades the RNA of RNA-DNA hybrids. The sequence is that of Ribonuclease HII from Haloarcula marismortui (strain ATCC 43049 / DSM 3752 / JCM 8966 / VKM B-1809) (Halobacterium marismortui).